We begin with the raw amino-acid sequence, 552 residues long: Ribosomal lysine N-methyltransferase 3 (552 aa).

Residues 26–335 form the SET domain; the sequence is SKCDIRESPL…QGQEIFNSYG (310 aa). Residue Y334 participates in S-adenosyl-L-methionine binding. A disordered region spans residues 399–432; sequence EDEEDEDGQAKSDNLSDDIESEEEEEEEEGDDSL. Positions 413-432 are enriched in acidic residues; that stretch reads LSDDIESEEEEEEEEGDDSL.

Belongs to the class V-like SAM-binding methyltransferase superfamily.

It localises to the nucleus. Its function is as follows. S-adenosyl-L-methionine-dependent protein-lysine N-methyltransferase that monomethylates 60S ribosomal protein L42 (RPL42A and RPL42B) at 'Lys-40'. The protein is Ribosomal lysine N-methyltransferase 3 of Saccharomyces cerevisiae (strain ATCC 204508 / S288c) (Baker's yeast).